Here is a 239-residue protein sequence, read N- to C-terminus: Tumor protein p53-inducible nuclear protein 1 (239 aa).

Positions 25 to 37 (EKEDDEWILVDFI) match the LIR motif.

Interacts with p53/TP53 and HIPK2. Interacts with PRKCG, GABARAP, GABARAPL1, GABARAPL2, MAP1LC3A, MAP1LC3B and MAP1LC3C. In terms of tissue distribution, specifically expressed by acinar cells of chronic pancreatitis tissue.

Its subcellular location is the cytoplasm. It localises to the cytosol. The protein resides in the nucleus. It is found in the PML body. The protein localises to the cytoplasmic vesicle. Its subcellular location is the autophagosome. Antiproliferative and proapoptotic protein involved in cell stress response which acts as a dual regulator of transcription and autophagy. Acts as a positive regulator of autophagy. In response to cellular stress or activation of autophagy, relocates to autophagosomes where it interacts with autophagosome-associated proteins GABARAP, GABARAPL1/L2, MAP1LC3A/B/C and regulates autophagy. Acts as an antioxidant and plays a major role in p53/TP53-driven oxidative stress response. Possesses both a p53/TP53-independent intracellular reactive oxygen species (ROS) regulatory function and a p53/TP53-dependent transcription regulatory function. Positively regulates p53/TP53 and p73/TP73 and stimulates their capacity to induce apoptosis and regulate cell cycle. In response to double-strand DNA breaks, promotes p53/TP53 phosphorylation on 'Ser-46' and subsequent apoptosis. Acts as a tumor suppressor by inducing cell death by an autophagy and caspase-dependent mechanism. Can reduce cell migration by regulating the expression of SPARC. In Rattus norvegicus (Rat), this protein is Tumor protein p53-inducible nuclear protein 1 (Trp53inp1).